Reading from the N-terminus, the 102-residue chain is MATAIVRSALSRAVTRAAPKTSVAPKRNFSSSAGHDDAYEAAKWEKITYLGIASCTALAVYVLSKGHHHGEDPPAYPHMHIRNKEFPWGPDGLFEVKHNKEH.

The transit peptide at 1-36 (MATAIVRSALSRAVTRAAPKTSVAPKRNFSSSAGHD) directs the protein to the mitochondrion.

The protein belongs to the cytochrome c oxidase subunit 6A (TC 3.D.4.11) family.

It is found in the mitochondrion inner membrane. This protein is one of the nuclear-coded polypeptide chains of cytochrome c oxidase, the terminal oxidase in mitochondrial electron transport. The sequence is that of Cytochrome c oxidase subunit 6a, mitochondrial (COX6A) from Arabidopsis thaliana (Mouse-ear cress).